The chain runs to 291 residues: Phosphatidylserine decarboxylase proenzyme (291 aa).

Residues Asp-90, His-147, and Ser-253 each act as charge relay system; for autoendoproteolytic cleavage activity in the active site. Ser-253 acts as the Schiff-base intermediate with substrate; via pyruvic acid; for decarboxylase activity in catalysis. The residue at position 253 (Ser-253) is a Pyruvic acid (Ser); by autocatalysis.

It belongs to the phosphatidylserine decarboxylase family. PSD-B subfamily. Prokaryotic type I sub-subfamily. In terms of assembly, heterodimer of a large membrane-associated beta subunit and a small pyruvoyl-containing alpha subunit. Pyruvate serves as cofactor. Is synthesized initially as an inactive proenzyme. Formation of the active enzyme involves a self-maturation process in which the active site pyruvoyl group is generated from an internal serine residue via an autocatalytic post-translational modification. Two non-identical subunits are generated from the proenzyme in this reaction, and the pyruvate is formed at the N-terminus of the alpha chain, which is derived from the carboxyl end of the proenzyme. The autoendoproteolytic cleavage occurs by a canonical serine protease mechanism, in which the side chain hydroxyl group of the serine supplies its oxygen atom to form the C-terminus of the beta chain, while the remainder of the serine residue undergoes an oxidative deamination to produce ammonia and the pyruvoyl prosthetic group on the alpha chain. During this reaction, the Ser that is part of the protease active site of the proenzyme becomes the pyruvoyl prosthetic group, which constitutes an essential element of the active site of the mature decarboxylase.

Its subcellular location is the cell membrane. The catalysed reaction is a 1,2-diacyl-sn-glycero-3-phospho-L-serine + H(+) = a 1,2-diacyl-sn-glycero-3-phosphoethanolamine + CO2. Its pathway is phospholipid metabolism; phosphatidylethanolamine biosynthesis; phosphatidylethanolamine from CDP-diacylglycerol: step 2/2. Its function is as follows. Catalyzes the formation of phosphatidylethanolamine (PtdEtn) from phosphatidylserine (PtdSer). The sequence is that of Phosphatidylserine decarboxylase proenzyme from Photobacterium profundum (strain SS9).